The following is a 548-amino-acid chain: Poly(ADP-ribose) glycohydrolase 1 (548 aa).

It belongs to the poly(ADP-ribose) glycohydrolase family.

The catalysed reaction is [(1''-&gt;2')-ADP-alpha-D-ribose](n) + H2O = [(1''-&gt;2')-ADP-alpha-D-ribose](n-1) + ADP-D-ribose. Its function is as follows. Poly(ADP-ribose) synthesized after DNA damage is only present transiently and is rapidly degraded by poly(ADP-ribose) glycohydrolase. Involved in establishing period length of the circadian oscillator. May regulate post-translational poly(ADP-ribosyl)ation of an oscillator component. This chain is Poly(ADP-ribose) glycohydrolase 1 (PARG1), found in Arabidopsis thaliana (Mouse-ear cress).